Reading from the N-terminus, the 151-residue chain is MGTIRLMHAKLHRVQVTEANIDYVGSITIDPILLDKVGILPLEEVDIVNLNNGNRFSTYVIPGETGKGEICPNGGAALLCQPGDLLIIYAYENCDRQEVIQRGHTARVIVADEDNKIQDFLIQTLVPCEDGNKVEFHNSSMIDTILESSQT.

The active-site Schiff-base intermediate with substrate; via pyruvic acid is Ser-26. Ser-26 bears the Pyruvic acid (Ser) mark. Residue Thr-58 coordinates substrate. Tyr-59 serves as the catalytic Proton donor. 74 to 76 lines the substrate pocket; it reads GGA.

It belongs to the PanD family. In terms of assembly, heterooctamer of four alpha and four beta subunits. Pyruvate serves as cofactor. In terms of processing, is synthesized initially as an inactive proenzyme, which is activated by self-cleavage at a specific serine bond to produce a beta-subunit with a hydroxyl group at its C-terminus and an alpha-subunit with a pyruvoyl group at its N-terminus.

Its subcellular location is the cytoplasm. The enzyme catalyses L-aspartate + H(+) = beta-alanine + CO2. It functions in the pathway cofactor biosynthesis; (R)-pantothenate biosynthesis; beta-alanine from L-aspartate: step 1/1. Its function is as follows. Catalyzes the pyruvoyl-dependent decarboxylation of aspartate to produce beta-alanine. The protein is Aspartate 1-decarboxylase of Crocosphaera subtropica (strain ATCC 51142 / BH68) (Cyanothece sp. (strain ATCC 51142)).